The sequence spans 404 residues: Cysteine desulfurase IscS (404 aa).

Pyridoxal 5'-phosphate is bound by residues 75–76 (AT), Asn-155, Gln-183, and 203–205 (SGH). Lys-206 carries the post-translational modification N6-(pyridoxal phosphate)lysine. Thr-243 contributes to the pyridoxal 5'-phosphate binding site. Cys-328 functions as the Cysteine persulfide intermediate in the catalytic mechanism. Residue Cys-328 participates in [2Fe-2S] cluster binding.

The protein belongs to the class-V pyridoxal-phosphate-dependent aminotransferase family. NifS/IscS subfamily. In terms of assembly, homodimer. Forms a heterotetramer with IscU, interacts with other sulfur acceptors. The cofactor is pyridoxal 5'-phosphate.

The protein localises to the cytoplasm. It carries out the reaction (sulfur carrier)-H + L-cysteine = (sulfur carrier)-SH + L-alanine. It functions in the pathway cofactor biosynthesis; iron-sulfur cluster biosynthesis. Its function is as follows. Master enzyme that delivers sulfur to a number of partners involved in Fe-S cluster assembly, tRNA modification or cofactor biosynthesis. Catalyzes the removal of elemental sulfur atoms from cysteine to produce alanine. Functions as a sulfur delivery protein for Fe-S cluster synthesis onto IscU, an Fe-S scaffold assembly protein, as well as other S acceptor proteins. The polypeptide is Cysteine desulfurase IscS (Shewanella putrefaciens (strain CN-32 / ATCC BAA-453)).